The chain runs to 202 residues: Putative NAD(P)H nitroreductase YodC (202 aa).

Residues 11–13 (RAS), 68–70 (QKQ), 155–156 (GG), and Arg192 contribute to the FMN site.

The protein belongs to the nitroreductase family. Requires FMN as cofactor.

Its subcellular location is the cytoplasm. In terms of biological role, putative nitroreductase that may contribute to the degradation of aromatic compounds. This chain is Putative NAD(P)H nitroreductase YodC (yodC), found in Bacillus subtilis (strain 168).